A 473-amino-acid chain; its full sequence is Phosphatidylserine synthase 2 (473 aa).

A disordered region spans residues 1–25; that stretch reads MRRGERRVAGGSGSESPLLKGRRST. At 1 to 40 the chain is on the cytoplasmic side; that stretch reads MRRGERRVAGGSGSESPLLKGRRSTESEVYDDGTNTFFWR. Ser-12, Ser-14, and Ser-16 each carry phosphoserine. The chain crosses the membrane as a helical span at residues 41 to 61; sequence AHTLTVLFILTCALGYVTLLE. Over 62–74 the chain is Lumenal; the sequence is ETPQDTAYNTKRG. Residues 75–95 traverse the membrane as a helical segment; it reads IVASILVFLCFGVTQAKDGPF. Residues 96–104 are Cytoplasmic-facing; the sequence is SRPHPAYWR. Residues 105–125 form a helical membrane-spanning segment; sequence FWLCVSVVYELFLIFILFQTV. At 126–291 the chain is on the lumenal side; that stretch reads QDGRQFLKYV…EWKPASSLHR (166 aa). Asn-159 is a glycosylation site (N-linked (GlcNAc...) asparagine). The helical transmembrane segment at 292-312 threads the bilayer; it reads WLAVCGIILVFLLAELNTFYL. Lys-313 is a topological domain (cytoplasmic). A helical membrane pass occupies residues 314 to 334; sequence FVLWMPPEHYLVLLRLVFFVN. Residues 335-354 are Lumenal-facing; sequence VGGVAMREIYDFMDELKPHR. A helical membrane pass occupies residues 355–375; it reads KLGQQAWLVAAITVTELLIVV. Residues 376-381 are Cytoplasmic-facing; it reads KYDPHT. The chain crosses the membrane as a helical span at residues 382–402; sequence LTLSLPFYISQCWTLGSILVL. The Lumenal portion of the chain corresponds to 403-473; sequence TWTVWRFFLR…TAEEGTSAAS (71 aa). Residues 422–473 are disordered; the sequence is RRQKQQSHQARAVNNRDGHPGPDDDLLGTGTAEEEGTTNDGVTAEEGTSAAS.

This sequence belongs to the phosphatidyl serine synthase family. Highly expressed in testis. Detected at lower levels in kidney and heart.

The protein resides in the endoplasmic reticulum membrane. Its subcellular location is the membrane. It carries out the reaction a 1,2-diacyl-sn-glycero-3-phosphoethanolamine + L-serine = a 1,2-diacyl-sn-glycero-3-phospho-L-serine + ethanolamine. The catalysed reaction is 1-hexadecanoyl-2-(9Z-octadecenoyl)-sn-glycero-3-phosphoethanolamine + L-serine = 1-hexadecanoyl-2-(9Z-octadecenoyl)-sn-glycero-3-phospho-L-serine + ethanolamine. The enzyme catalyses 1-hexadecanoyl-2-(4Z,7Z,10Z,13Z,16Z,19Z-docosahexaenoyl)-sn-glycero-3-phosphoethanolamine + L-serine = 1-hexadecanoyl-2-(4Z,7Z,10Z,13Z,16Z,19Z-docosahexaenoyl)-sn-glycero-3-phosphoserine + ethanolamine. It catalyses the reaction 1-octadecanoyl-2-(5Z,8Z,11Z,14Z)-eicosatetraenoyl-sn-glycero-3-phosphoethanolamine + L-serine = 1-octadecanoyl-2-(5Z,8Z,11Z,14Z)-eicosatetraenoyl-sn-glycero-3-phosphoserine + ethanolamine. It carries out the reaction 1-octadecanoyl-2-(4Z,7Z,10Z,13Z,16Z,19Z-docosahexaenoyl)-sn-glycero-3-phosphoethanolamine + L-serine = 1-octadecanoyl-2-(4Z,7Z,10Z,13Z,16Z,19Z-docosahexaenoyl)-sn-glycero-3-phosphoserine + ethanolamine. The catalysed reaction is 1-(1Z-octadecenyl)-2-(4Z,7Z,10Z,13Z,16Z,19Z-docosahexaenoyl)-sn-glycero-3-phosphoethanolamine + L-serine = 1-(1Z-octadecenyl)-2-(4Z,7Z,10Z,13Z,16Z,19Z-docosahexaenoyl)-sn-glycero-3-phospho-L-serine + ethanolamine. The enzyme catalyses 1-octadecanoyl-2-(9Z-octadecenoyl)-sn-glycero-3-phosphoethanolamine + L-serine = 1-octadecanoyl-2-(9Z-octadecenoyl)-sn-glycero-3-phospho-L-serine + ethanolamine. It catalyses the reaction 1-(1Z-octadecenyl)-2-(9Z-octadecenoyl)-sn-glycero-3-phosphoethanolamine + L-serine = 1-(1Z-octadecenyl)-2-(9Z-octadecenoyl)-sn-glycero-3-phospho-L-serine + ethanolamine. It carries out the reaction 1-(1Z-octadecenyl)-2-(5Z,8Z,11Z,14Z- eicosatetraenoyl)-sn-glycero-3-phosphoethanolamine + L-serine = 1-(1Z-octadecenyl)-2-(5Z,8Z,11Z,14Z-eicosatetraenoyl)-sn-glycero-3-phospho-L-serine + ethanolamine. The protein operates within phospholipid metabolism; phosphatidylserine biosynthesis. With respect to regulation, almost complete inhibition by ethanolamine in both the mitochondria-associated membrane (MAM) and endoplasmic reticulum (ER) per se. Functionally, catalyzes a base-exchange reaction in which the polar head group of phosphatidylethanolamine (PE) or phosphatidylcholine (PC) is replaced by L-serine. Catalyzes the conversion of phosphatatidylethanolamine and does not act on phosphatidylcholine. Can utilize both phosphatidylethanolamine (PE) plasmalogen and diacyl PE as substrate and the latter is six times better utilized, indicating the importance of an ester linkage at the sn-1 position. Although it shows no sn-1 fatty acyl preference, exhibits significant preference towards docosahexaenoic acid (22:6n-3) compared with 18:1 or 20:4 at the sn-2 position. In Mus musculus (Mouse), this protein is Phosphatidylserine synthase 2 (Ptdss2).